Reading from the N-terminus, the 50-residue chain is Sperm protamine P1 (50 aa).

This sequence belongs to the protamine P1 family. As to quaternary structure, cross-linked by interchain disulfide bonds around the DNA-helix. As to expression, testis.

Its subcellular location is the nucleus. The protein resides in the chromosome. Functionally, protamines substitute for histones in the chromatin of sperm during the haploid phase of spermatogenesis. They compact sperm DNA into a highly condensed, stable and inactive complex. This is Sperm protamine P1 (PRM1) from Saguinus imperator (Emperor tamarin).